Here is a 345-residue protein sequence, read N- to C-terminus: Phosphoribosylformylglycinamidine cyclo-ligase (345 aa).

The protein belongs to the AIR synthase family.

Its subcellular location is the cytoplasm. It catalyses the reaction 2-formamido-N(1)-(5-O-phospho-beta-D-ribosyl)acetamidine + ATP = 5-amino-1-(5-phospho-beta-D-ribosyl)imidazole + ADP + phosphate + H(+). The protein operates within purine metabolism; IMP biosynthesis via de novo pathway; 5-amino-1-(5-phospho-D-ribosyl)imidazole from N(2)-formyl-N(1)-(5-phospho-D-ribosyl)glycinamide: step 2/2. In Methanopyrus kandleri (strain AV19 / DSM 6324 / JCM 9639 / NBRC 100938), this protein is Phosphoribosylformylglycinamidine cyclo-ligase.